Reading from the N-terminus, the 155-residue chain is DNA gyrase inhibitor (155 aa).

This sequence belongs to the DNA gyrase inhibitor family. As to quaternary structure, interacts with DNA gyrase.

It is found in the cytoplasm. Its function is as follows. Inhibits the supercoiling activity of DNA gyrase. Acts by inhibiting DNA gyrase at an early step, prior to (or at the step of) binding of DNA by the gyrase. It protects cells against toxins that target DNA gyrase, by inhibiting activity of these toxins and reducing the formation of lethal double-strand breaks in the cell. The sequence is that of DNA gyrase inhibitor from Salmonella typhi.